Reading from the N-terminus, the 450-residue chain is Proline--tRNA ligase (450 aa).

This sequence belongs to the class-II aminoacyl-tRNA synthetase family. ProS type 2 subfamily. Homodimer.

It localises to the cytoplasm. The enzyme catalyses tRNA(Pro) + L-proline + ATP = L-prolyl-tRNA(Pro) + AMP + diphosphate. Catalyzes the attachment of proline to tRNA(Pro) in a two-step reaction: proline is first activated by ATP to form Pro-AMP and then transferred to the acceptor end of tRNA(Pro). The chain is Proline--tRNA ligase from Paracoccus denitrificans (strain Pd 1222).